The chain runs to 467 residues: tRNA-2-methylthio-N(6)-dimethylallyladenosine synthase (467 aa).

Residues 1–20 (MSDDTTQIEPAMAQETSPRA) form a disordered region. Positions 23 to 143 (RKVFVKTYGC…LPNALARVRG (121 aa)) constitute an MTTase N-terminal domain. [4Fe-4S] cluster contacts are provided by Cys32, Cys68, Cys106, Cys184, Cys188, and Cys191. The Radical SAM core domain maps to 170–402 (RKRGVSAFLT…QALLSAQQYA (233 aa)). One can recognise a TRAM domain in the interval 405–467 (DSMIGRKMDV…TNSLIAQKLA (63 aa)).

The protein belongs to the methylthiotransferase family. MiaB subfamily. In terms of assembly, monomer. [4Fe-4S] cluster serves as cofactor.

Its subcellular location is the cytoplasm. The catalysed reaction is N(6)-dimethylallyladenosine(37) in tRNA + (sulfur carrier)-SH + AH2 + 2 S-adenosyl-L-methionine = 2-methylsulfanyl-N(6)-dimethylallyladenosine(37) in tRNA + (sulfur carrier)-H + 5'-deoxyadenosine + L-methionine + A + S-adenosyl-L-homocysteine + 2 H(+). Catalyzes the methylthiolation of N6-(dimethylallyl)adenosine (i(6)A), leading to the formation of 2-methylthio-N6-(dimethylallyl)adenosine (ms(2)i(6)A) at position 37 in tRNAs that read codons beginning with uridine. This chain is tRNA-2-methylthio-N(6)-dimethylallyladenosine synthase, found in Brucella melitensis biotype 1 (strain ATCC 23456 / CCUG 17765 / NCTC 10094 / 16M).